Here is a 499-residue protein sequence, read N- to C-terminus: Alpha-amylase 3 (499 aa).

Positions 127 and 183 each coordinate Ca(2+). The active-site Nucleophile is the aspartate 213. Histidine 217 serves as a coordination point for Ca(2+). Residue glutamate 248 is the Proton donor of the active site.

The protein belongs to the glycosyl hydrolase 13 family. As to quaternary structure, monomer. Ca(2+) serves as cofactor.

The protein resides in the cytoplasm. It catalyses the reaction Endohydrolysis of (1-&gt;4)-alpha-D-glucosidic linkages in polysaccharides containing three or more (1-&gt;4)-alpha-linked D-glucose units.. This is Alpha-amylase 3 (amyC) from Dictyoglomus thermophilum (strain ATCC 35947 / DSM 3960 / H-6-12).